Reading from the N-terminus, the 330-residue chain is Beta-ketoacyl-[acyl-carrier-protein] synthase III (330 aa).

Active-site residues include Cys118 and His257. The interval 258–262 (QANLR) is ACP-binding. Asn287 is an active-site residue.

Belongs to the thiolase-like superfamily. FabH family. As to quaternary structure, homodimer.

The protein localises to the cytoplasm. The catalysed reaction is malonyl-[ACP] + acetyl-CoA + H(+) = 3-oxobutanoyl-[ACP] + CO2 + CoA. It participates in lipid metabolism; fatty acid biosynthesis. In terms of biological role, catalyzes the condensation reaction of fatty acid synthesis by the addition to an acyl acceptor of two carbons from malonyl-ACP. Catalyzes the first condensation reaction which initiates fatty acid synthesis and may therefore play a role in governing the total rate of fatty acid production. Possesses both acetoacetyl-ACP synthase and acetyl transacylase activities. Its substrate specificity determines the biosynthesis of branched-chain and/or straight-chain of fatty acids. The polypeptide is Beta-ketoacyl-[acyl-carrier-protein] synthase III (Nitratidesulfovibrio vulgaris (strain DSM 19637 / Miyazaki F) (Desulfovibrio vulgaris)).